Consider the following 145-residue polypeptide: Probable inactive ribonuclease-like protein 12 (145 aa).

An N-terminal signal peptide occupies residues 1 to 19 (MILMVIVFLLLLFWENELT). The N-linked (GlcNAc...) asparagine glycan is linked to N88.

Belongs to the pancreatic ribonuclease family.

The protein resides in the secreted. Its function is as follows. Does not exhibit any ribonuclease activity. This is Probable inactive ribonuclease-like protein 12 (Rnase12) from Rattus norvegicus (Rat).